We begin with the raw amino-acid sequence, 635 residues long: ATP-binding protein Uup (635 aa).

ABC transporter domains are found at residues 1-253 (MSLI…RVEE) and 320-546 (FEME…KTEE). ATP is bound by residues 36–43 (GRNGAGKS) and 352–359 (GPNGCGKT). Positions 551-635 (KAETVKRSSS…EYLEALKNGG (85 aa)) are C-terminal domain (CTD), binds DNA, required to complement a deletion mutant. The stretch at 563–631 (SYKLQRELEQ…FERWEYLEAL (69 aa)) forms a coiled coil.

It belongs to the ABC transporter superfamily. ABCF family. Uup subfamily.

It is found in the cytoplasm. The enzyme catalyses ATP + H2O = ADP + phosphate + H(+). With respect to regulation, ATPase activity inhibited by N-ethylmaleimide but not by vanadate. In terms of biological role, probably plays a role in ribosome assembly or function; overexpression suppresses cold-sensitive growth of a bipA deletion. May be involved in resolution of branched DNA intermediates that result from template switching in postreplication gaps. Binds DNA at Holliday junctions. May be involved in the correct segregation of nucleoids. Has ATPase activity, binds DNA non-sequence specifically; the presence of DNA does not change the ATPase activity. Mutations in this gene cause an increase in RecA-independent precise excision of transposons and insertion elements, and also reduce bacteriophage Mu growth. Genetic interactions among priB, dam, lexA, nagC, polA, rdgB, rdgB, rep and uup link the PriA-PriB replication restart pathway to DNA double-strand break repair. This is ATP-binding protein Uup from Escherichia coli (strain K12).